Reading from the N-terminus, the 202-residue chain is MFEELDAEDGGEEQEMPMNVPEFGGGGEDIDDILGDAPDLPDDEYSNSVPQGAADGSIENDERRMRNDGAGSTNEDDEEPIEPTYLGDAIDSLMMHWCQLLTNVSVKAPVPPPSTLNHVKEVAEVCSKHFRDASVDVNNEFTRLGVQWEMEQPYSQYAIEEENLDEAIERQETIIAAAREMLNSRIQIYNEAHPNAGKHFTT.

2 stretches are compositionally biased toward acidic residues: residues 1 to 15 (MFEELDAEDGGEEQE) and 28 to 45 (EDIDDILGDAPDLPDDEY). The interval 1–83 (MFEELDAEDG…NEDDEEPIEP (83 aa)) is disordered. The stretch at 159 to 184 (IEEENLDEAIERQETIIAAAREMLNS) forms a coiled coil.

Interacts with mdt-6 and mdt-30. In terms of tissue distribution, ubiquitously expressed in tissues including epidermal, intestinal, pharyngeal and uterine, and is also expressed in vulval muscle cells and gut granules.

The protein localises to the nucleus. Its subcellular location is the cytoplasm. Functionally, plays a role in normal growth and development. This is Coiled-coil domain-containing protein mdt-28 from Caenorhabditis elegans.